Here is a 432-residue protein sequence, read N- to C-terminus: MGNNVVVLGTQWGDEGKGKIVDLLTERAKYVVRYQGGHNAGHTLVINGEKTVLHLIPSGILRENVISIIGNGVVLSPSALMKEMQELEDRGIPVRERLLLSEACPLILDYHVALDNAREKARGAKAIGTTGRGIGPAYEDKVARRGLRVGDLFDKATFAEKLKEVMEYHNFQLVNFYKVDAVDYQKVLDDVMAIADILTGMVVDVSDLLDQARKRGDFVMFEGAQGTLLDIDHGTYPYVTSSNTTAGGVATGSGLGPRYVDYVLGIIKAYSTRVGAGPFPTELFDETGEFLCKQGNEYGATTGRRRRTGWLDSVAIRRAVQINSLSGFCLTKLDVLDGLKEVKICVAYRMPDGREVTTTPLAADDWQGIEPIYETMPGWSESTFGVKDRSGLPAAALNYIKRIEELTGVPIDIISTGPDRTETMILRDPFDA.

Residues 13–19 and 41–43 each bind GTP; these read GDEGKGK and GHT. The active-site Proton acceptor is the D14. Residues D14 and G41 each coordinate Mg(2+). Residues 14–17, 39–42, T130, R144, Q225, T240, and R304 contribute to the IMP site; these read DEGK and NAGH. H42 serves as the catalytic Proton donor. Residue 300 to 306 coordinates substrate; sequence ATTGRRR. GTP is bound by residues R306, 332-334, and 415-417; these read KLD and STG.

This sequence belongs to the adenylosuccinate synthetase family. Homodimer. Mg(2+) is required as a cofactor.

Its subcellular location is the cytoplasm. It carries out the reaction IMP + L-aspartate + GTP = N(6)-(1,2-dicarboxyethyl)-AMP + GDP + phosphate + 2 H(+). It participates in purine metabolism; AMP biosynthesis via de novo pathway; AMP from IMP: step 1/2. In terms of biological role, plays an important role in the de novo pathway of purine nucleotide biosynthesis. Catalyzes the first committed step in the biosynthesis of AMP from IMP. The polypeptide is Adenylosuccinate synthetase (Salmonella arizonae (strain ATCC BAA-731 / CDC346-86 / RSK2980)).